A 511-amino-acid polypeptide reads, in one-letter code: GMP synthase [glutamine-hydrolyzing] (511 aa).

One can recognise a Glutamine amidotransferase type-1 domain in the interval 5–195 (DILVLDFGSQ…AKYACNCESV (191 aa)). Catalysis depends on cysteine 82, which acts as the Nucleophile. Residues histidine 169 and glutamate 171 contribute to the active site. Positions 196-386 (WNMGSFAKTQ…LGLSKEVVYR (191 aa)) constitute a GMPS ATP-PPase domain. 223-229 (SGGVDSS) serves as a coordination point for ATP.

Homodimer.

It carries out the reaction XMP + L-glutamine + ATP + H2O = GMP + L-glutamate + AMP + diphosphate + 2 H(+). The protein operates within purine metabolism; GMP biosynthesis; GMP from XMP (L-Gln route): step 1/1. Catalyzes the synthesis of GMP from XMP. This is GMP synthase [glutamine-hydrolyzing] from Campylobacter jejuni (strain RM1221).